The chain runs to 134 residues: Holo-[acyl-carrier-protein] synthase (134 aa).

Mg(2+) contacts are provided by Asp-8 and Glu-58.

The protein belongs to the P-Pant transferase superfamily. AcpS family. Mg(2+) serves as cofactor.

The protein localises to the cytoplasm. The catalysed reaction is apo-[ACP] + CoA = holo-[ACP] + adenosine 3',5'-bisphosphate + H(+). Functionally, transfers the 4'-phosphopantetheine moiety from coenzyme A to a Ser of acyl-carrier-protein. This Ruminiclostridium cellulolyticum (strain ATCC 35319 / DSM 5812 / JCM 6584 / H10) (Clostridium cellulolyticum) protein is Holo-[acyl-carrier-protein] synthase.